The primary structure comprises 157 residues: Transcription elongation factor GreB (157 aa).

The protein belongs to the GreA/GreB family. GreB subfamily.

Functionally, necessary for efficient RNA polymerase transcription elongation past template-encoded arresting sites. The arresting sites in DNA have the property of trapping a certain fraction of elongating RNA polymerases that pass through, resulting in locked ternary complexes. Cleavage of the nascent transcript by cleavage factors such as GreA or GreB allows the resumption of elongation from the new 3'terminus. GreB releases sequences of up to 9 nucleotides in length. This Salmonella typhi protein is Transcription elongation factor GreB.